A 257-amino-acid polypeptide reads, in one-letter code: Imidazole glycerol phosphate synthase subunit HisF (257 aa).

Active-site residues include D11 and D130.

Belongs to the HisA/HisF family. Heterodimer of HisH and HisF.

It is found in the cytoplasm. It catalyses the reaction 5-[(5-phospho-1-deoxy-D-ribulos-1-ylimino)methylamino]-1-(5-phospho-beta-D-ribosyl)imidazole-4-carboxamide + L-glutamine = D-erythro-1-(imidazol-4-yl)glycerol 3-phosphate + 5-amino-1-(5-phospho-beta-D-ribosyl)imidazole-4-carboxamide + L-glutamate + H(+). It functions in the pathway amino-acid biosynthesis; L-histidine biosynthesis; L-histidine from 5-phospho-alpha-D-ribose 1-diphosphate: step 5/9. IGPS catalyzes the conversion of PRFAR and glutamine to IGP, AICAR and glutamate. The HisF subunit catalyzes the cyclization activity that produces IGP and AICAR from PRFAR using the ammonia provided by the HisH subunit. The protein is Imidazole glycerol phosphate synthase subunit HisF of Shewanella sediminis (strain HAW-EB3).